A 55-amino-acid chain; its full sequence is Mitochondrial import receptor subunit TOM7 homolog (55 aa).

Residues 1-20 are Cytoplasmic-facing; sequence MVKLSKEAKQRLQQLFKGGQ. The helical transmembrane segment at 21 to 40 threads the bilayer; sequence FAIRWGFIPLVIYLGFTRGA. Topologically, residues 41–55 are mitochondrial intermembrane; sequence DPGMPEPSVLSLLWG.

The protein belongs to the Tom7 family. As to quaternary structure, forms part of the preprotein translocase complex of the outer mitochondrial membrane (TOM complex) which consists of at least 7 different proteins (TOMM5, TOMM6, TOMM7, TOMM20, TOMM22, TOMM40 and TOMM70).

The protein localises to the mitochondrion outer membrane. Required for assembly and stability of the TOM complex. Positive regulator of PRKN translocation to damaged mitochondria. Acts probably by stabilizing PINK1 on the outer membrane of depolarized mitochondria. This chain is Mitochondrial import receptor subunit TOM7 homolog (Tomm7), found in Mus musculus (Mouse).